Consider the following 229-residue polypeptide: Ras-like protein rasV (229 aa).

Position 40–47 (40–47 (GDGGVGKT)) interacts with GTP. The short motif at 62–70 (YDPTIEDSY) is the Effector region element. GTP-binding positions include 87–91 (DTAGQ) and 146–149 (NKSD). C226 carries the post-translational modification Cysteine methyl ester. The S-geranylgeranyl cysteine moiety is linked to residue C226. Residues 227-229 (KVM) constitute a propeptide, removed in mature form.

The protein belongs to the small GTPase superfamily. Ras family.

The protein localises to the cell membrane. The catalysed reaction is GTP + H2O = GDP + phosphate + H(+). Functionally, ras proteins bind GDP/GTP and possess intrinsic GTPase activity. The chain is Ras-like protein rasV (rasV) from Dictyostelium discoideum (Social amoeba).